We begin with the raw amino-acid sequence, 488 residues long: B-type flagellin (488 aa).

This sequence belongs to the bacterial flagellin family. In terms of processing, phosphorylated on tyrosine residue(s).

The protein localises to the secreted. It localises to the bacterial flagellum. Functionally, flagellin is the subunit protein which polymerizes to form the filaments of bacterial flagella. This Pseudomonas aeruginosa (strain ATCC 15692 / DSM 22644 / CIP 104116 / JCM 14847 / LMG 12228 / 1C / PRS 101 / PAO1) protein is B-type flagellin (fliC).